The chain runs to 481 residues: Cysteine protease atg-4.1 (481 aa).

C112 serves as the catalytic Nucleophile. Residues D313 and H315 contribute to the active site. Positions D462–A481 are disordered.

The protein belongs to the peptidase C54 family.

The protein resides in the cytoplasm. It catalyses the reaction [protein]-C-terminal L-amino acid-glycyl-phosphatidylethanolamide + H2O = [protein]-C-terminal L-amino acid-glycine + a 1,2-diacyl-sn-glycero-3-phosphoethanolamine. In terms of biological role, cysteine protease required for autophagy. Cleaves the C-terminal amino acid of ATG8 family proteins lgg-1, to reveal a C-terminal glycine. Exposure of the glycine at the C-terminus is essential for ATG8 proteins conjugation to phosphatidylethanolamine (PE) and insertion to membranes, which is necessary for autophagy. Its cleavage activity is functionally redundant to atg-4.2, but it cleaves lgg-1 precursors more efficiently than atg-4.2. Acts redundantly with atg-4.2 to promote the lgg-1 delipidation to release the protein from membranes, which facilitates multiple events during macroautophagy. Unlike atg-4.2 does not seem to be required for autophagosome maturation. This Caenorhabditis elegans protein is Cysteine protease atg-4.1.